We begin with the raw amino-acid sequence, 426 residues long: Methionine aminopeptidase 2 (426 aa).

Residues methionine 1–glycine 72 form a disordered region. Residues threonine 10 to glutamate 34 are compositionally biased toward basic and acidic residues. Residues lysine 47–lysine 60 are compositionally biased toward basic residues. Histidine 179 provides a ligand contact to substrate. A divalent metal cation-binding residues include aspartate 199, aspartate 210, and histidine 279. Substrate is bound at residue histidine 287. A divalent metal cation is bound by residues glutamate 312 and glutamate 407.

Belongs to the peptidase M24A family. Methionine aminopeptidase eukaryotic type 2 subfamily. The cofactor is Co(2+). Zn(2+) serves as cofactor. Requires Mn(2+) as cofactor. Fe(2+) is required as a cofactor.

It localises to the cytoplasm. The catalysed reaction is Release of N-terminal amino acids, preferentially methionine, from peptides and arylamides.. Cotranslationally removes the N-terminal methionine from nascent proteins. The N-terminal methionine is often cleaved when the second residue in the primary sequence is small and uncharged (Met-Ala-, Cys, Gly, Pro, Ser, Thr, or Val). This chain is Methionine aminopeptidase 2 (fma2), found in Schizosaccharomyces pombe (strain 972 / ATCC 24843) (Fission yeast).